A 251-amino-acid polypeptide reads, in one-letter code: Probable transcriptional regulatory protein MLBr00475 (251 aa).

Belongs to the TACO1 family.

It is found in the cytoplasm. The polypeptide is Probable transcriptional regulatory protein MLBr00475 (Mycobacterium leprae (strain Br4923)).